The chain runs to 221 residues: uncharacterized protein (221 aa).

The N-terminal stretch at Met-1–Gln-30 is a signal peptide.

The protein localises to the virion. This is an uncharacterized protein from Acanthamoeba polyphaga mimivirus (APMV).